Reading from the N-terminus, the 127-residue chain is Gamma-synuclein (127 aa).

2 tandem repeats follow at residues 20–30 (EKTKQGVTEAA) and 31–41 (EKTKEGVMYVG). Residues 20–67 (EKTKQGVTEAAEKTKEGVMYVGAKTKENVVQSVTSVAEKTKEQANAVS) form a 4 X 11 AA tandem repeats of [EGSA]-K-T-K-[EQ]-[GQ]-V-X(4) region. A 3; approximate repeat occupies 42 to 56 (AKTKENVVQSVTSVA). Copy 4 of the repeat occupies 57–67 (EKTKEQANAVS). Phosphoserine is present on residues Ser67 and Ser72. Residues 96-127 (RKEDLRPSAPQQEGEASKEKEEVAEEAQSGGD) are disordered. Ser124 carries the phosphoserine; by BARK1, CaMK2 and CK2 modification.

Belongs to the synuclein family. May be a centrosome-associated protein. Interacts with MYOC; affects its secretion and its aggregation. Phosphorylated. Phosphorylation by GRK5 appears to occur on residues distinct from the residue phosphorylated by other kinases. In terms of tissue distribution, highly expressed in brain, particularly in the substantia nigra. Also expressed in the corpus callosum, heart, skeletal muscle, ovary, testis, colon and spleen. Weak expression in pancreas, kidney and lung.

The protein localises to the cytoplasm. It is found in the perinuclear region. Its subcellular location is the cytoskeleton. It localises to the microtubule organizing center. The protein resides in the centrosome. The protein localises to the spindle. Functionally, plays a role in neurofilament network integrity. May be involved in modulating axonal architecture during development and in the adult. In vitro, increases the susceptibility of neurofilament-H to calcium-dependent proteases. May also function in modulating the keratin network in skin. Activates the MAPK and Elk-1 signal transduction pathway. The polypeptide is Gamma-synuclein (SNCG) (Homo sapiens (Human)).